A 450-amino-acid polypeptide reads, in one-letter code: Signal recognition particle 54 kDa protein (450 aa).

Residues 107-114 (GIQGSGKT), 188-192 (DTAGR), and 247-250 (TKLD) contribute to the GTP site.

The protein belongs to the GTP-binding SRP family. SRP54 subfamily. Part of the signal recognition particle protein translocation system, which is composed of SRP and FtsY. Archaeal SRP consists of a 7S RNA molecule of 300 nucleotides and two protein subunits: SRP54 and SRP19.

The protein localises to the cytoplasm. It catalyses the reaction GTP + H2O = GDP + phosphate + H(+). Involved in targeting and insertion of nascent membrane proteins into the cytoplasmic membrane. Binds to the hydrophobic signal sequence of the ribosome-nascent chain (RNC) as it emerges from the ribosomes. The SRP-RNC complex is then targeted to the cytoplasmic membrane where it interacts with the SRP receptor FtsY. The chain is Signal recognition particle 54 kDa protein from Methanococcus maripaludis (strain C5 / ATCC BAA-1333).